The following is a 412-amino-acid chain: Phosphoglycerate kinase 1 (412 aa).

Substrate contacts are provided by residues 28–30, 65–68, Arg-122, and Arg-162; these read DFN and HQGR. Residues Glu-336 and 361–364 contribute to the ATP site; that span reads GGHT.

This sequence belongs to the phosphoglycerate kinase family. In terms of assembly, monomer.

The protein localises to the cytoplasm. It carries out the reaction (2R)-3-phosphoglycerate + ATP = (2R)-3-phospho-glyceroyl phosphate + ADP. It participates in carbohydrate degradation; glycolysis; pyruvate from D-glyceraldehyde 3-phosphate: step 2/5. This Methanosarcina acetivorans (strain ATCC 35395 / DSM 2834 / JCM 12185 / C2A) protein is Phosphoglycerate kinase 1.